The chain runs to 71 residues: Phosphatidylinositol N-acetylglucosaminyltransferase subunit Y (71 aa).

Over 1 to 3 (MFL) the chain is Cytoplasmic. The chain crosses the membrane as a helical span at residues 4 to 26 (SLPTLTVLIPLVSLAGLFYSASV). Residues 27 to 44 (EENFPQGCTSTASLCFYS) lie on the Lumenal side of the membrane. Residues 45 to 65 (LLLPITIPVYVFFHLWTWMGI) form a helical membrane-spanning segment. The Cytoplasmic portion of the chain corresponds to 66–71 (KLFRHN).

As to quaternary structure, component of the glycosylphosphatidylinositol-N-acetylglucosaminyltransferase (GPI-GnT) complex composed at least by PIGA, PIGC, PIGH, PIGP, PIGQ, PIGY and DPM2. Interacts directly with PIGA; this interaction regulates glycosylphosphatidylinositol-N-acetylglucosaminyltransferase activity. Does not interact with Ras proteins.

Its subcellular location is the endoplasmic reticulum membrane. It participates in glycolipid biosynthesis; glycosylphosphatidylinositol-anchor biosynthesis. Part of the glycosylphosphatidylinositol-N-acetylglucosaminyltransferase (GPI-GnT) complex that catalyzes the transfer of N-acetylglucosamine from UDP-N-acetylglucosamine to phosphatidylinositol and participates in the first step of GPI biosynthesis. May act by regulating the catalytic subunit PIGA. This Homo sapiens (Human) protein is Phosphatidylinositol N-acetylglucosaminyltransferase subunit Y.